We begin with the raw amino-acid sequence, 179 residues long: Large ribosomal subunit protein bL17 (179 aa).

The disordered stretch occupies residues 123-179 (RTRGTDTLPDTVTDTGPDSAPDPVPGSEPGSAAGDLPDADTAPADPGESSSNQRVIR). Low complexity predominate over residues 154-168 (AAGDLPDADTAPADP). Residues 170–179 (ESSSNQRVIR) show a composition bias toward polar residues.

This sequence belongs to the bacterial ribosomal protein bL17 family. In terms of assembly, part of the 50S ribosomal subunit. Contacts protein L32.

This Tropheryma whipplei (strain Twist) (Whipple's bacillus) protein is Large ribosomal subunit protein bL17.